Consider the following 172-residue polypeptide: Large ribosomal subunit protein uL10 (172 aa).

This sequence belongs to the universal ribosomal protein uL10 family. As to quaternary structure, part of the ribosomal stalk of the 50S ribosomal subunit. The N-terminus interacts with L11 and the large rRNA to form the base of the stalk. The C-terminus forms an elongated spine to which L12 dimers bind in a sequential fashion forming a multimeric L10(L12)X complex.

In terms of biological role, forms part of the ribosomal stalk, playing a central role in the interaction of the ribosome with GTP-bound translation factors. The chain is Large ribosomal subunit protein uL10 from Chlorobium chlorochromatii (strain CaD3).